Consider the following 420-residue polypeptide: Serine hydroxymethyltransferase (420 aa).

(6S)-5,6,7,8-tetrahydrofolate-binding positions include Leu121 and Gly125 to Leu127. Lys229 carries the N6-(pyridoxal phosphate)lysine modification.

Belongs to the SHMT family. As to quaternary structure, homodimer. It depends on pyridoxal 5'-phosphate as a cofactor.

It is found in the cytoplasm. It catalyses the reaction (6R)-5,10-methylene-5,6,7,8-tetrahydrofolate + glycine + H2O = (6S)-5,6,7,8-tetrahydrofolate + L-serine. Its pathway is one-carbon metabolism; tetrahydrofolate interconversion. The protein operates within amino-acid biosynthesis; glycine biosynthesis; glycine from L-serine: step 1/1. Its function is as follows. Catalyzes the reversible interconversion of serine and glycine with tetrahydrofolate (THF) serving as the one-carbon carrier. This reaction serves as the major source of one-carbon groups required for the biosynthesis of purines, thymidylate, methionine, and other important biomolecules. Also exhibits THF-independent aldolase activity toward beta-hydroxyamino acids, producing glycine and aldehydes, via a retro-aldol mechanism. The sequence is that of Serine hydroxymethyltransferase from Pasteurella multocida (strain Pm70).